The following is a 198-amino-acid chain: Recombination protein RecR (198 aa).

Residues 57 to 72 (CSSCGHITDKDPCYIC) form a C4-type zinc finger. One can recognise a Toprim domain in the interval 80–175 (SIICVVQDPK…KITRIAHGLP (96 aa)).

The protein belongs to the RecR family.

May play a role in DNA repair. It seems to be involved in an RecBC-independent recombinational process of DNA repair. It may act with RecF and RecO. In Anoxybacillus flavithermus (strain DSM 21510 / WK1), this protein is Recombination protein RecR.